The following is a 129-amino-acid chain: Holo-[acyl-carrier-protein] synthase (129 aa).

Positions 8 and 60 each coordinate Mg(2+).

It belongs to the P-Pant transferase superfamily. AcpS family. It depends on Mg(2+) as a cofactor.

It localises to the cytoplasm. It catalyses the reaction apo-[ACP] + CoA = holo-[ACP] + adenosine 3',5'-bisphosphate + H(+). In terms of biological role, transfers the 4'-phosphopantetheine moiety from coenzyme A to a Ser of acyl-carrier-protein. This is Holo-[acyl-carrier-protein] synthase from Anaeromyxobacter sp. (strain Fw109-5).